The chain runs to 262 residues: Adenosine deaminase RL5 (262 aa).

The Cu cation site is built by Asn-36, Tyr-40, Met-68, His-73, Cys-75, Asn-114, Cys-118, His-135, Cys-172, Cys-175, Cys-234, and Cys-237.

It belongs to the purine nucleoside phosphorylase YfiH/LACC1 family. In terms of assembly, homodimer. The cofactor is Cu cation.

The enzyme catalyses adenosine + phosphate = alpha-D-ribose 1-phosphate + adenine. It catalyses the reaction S-methyl-5'-thioadenosine + phosphate = 5-(methylsulfanyl)-alpha-D-ribose 1-phosphate + adenine. The catalysed reaction is inosine + phosphate = alpha-D-ribose 1-phosphate + hypoxanthine. It carries out the reaction adenosine + H2O + H(+) = inosine + NH4(+). Purine nucleoside enzyme that catalyzes the phosphorolysis of adenosine and inosine nucleosides, yielding D-ribose 1-phosphate and the respective free bases, adenine and hypoxanthine. Also catalyzes the phosphorolysis of S-methyl-5'-thioadenosine into adenine and S-methyl-5-thio-alpha-D-ribose 1-phosphate. Also has adenosine deaminase activity. Also acts as a multicopper oxidase able to oxidize a wide variety of polyphenols and related compounds in vitro. Displays substrate preference as follows: syringaldazine &gt; 2,6-dimethoxyphenol &gt; veratryl alcohol &gt; guaiacol &gt; tetramethylbenzidine &gt; 4-methoxybenzyl alcohol &gt; 2,2'-azino-bis(3-ethylbenzthiazoline-6-sulfonic acid) (ABTS) &gt;&gt; phenol red &gt; 1-hydroxybenzotriazole. Cannot use 3,4-dimetoxybenzyl alcohol and violuric acid as substrates. As this enzyme is derived from a rumen microbial community, it may have a role in the digestion of complex plant materials such as ryegrass lignin. This Unknown prokaryotic organism protein is Adenosine deaminase RL5.